The sequence spans 452 residues: Deoxybrevianamide E synthase notF (452 aa).

Over residues 1–19 (MTAPELRVDTFRAPEDAPK) the composition is skewed to basic and acidic residues. The disordered stretch occupies residues 1 to 38 (MTAPELRVDTFRAPEDAPKEPSAQQPRLPSSPSPAQAL). Low complexity predominate over residues 21–38 (PSAQQPRLPSSPSPAQAL). Residue glutamate 108 participates in brevianamide F binding. Positions 122, 212, 214, 282, 284, 371, 436, and 440 each coordinate dimethylallyl diphosphate.

This sequence belongs to the tryptophan dimethylallyltransferase family. In terms of assembly, monomer.

The enzyme catalyses brevianamide F + dimethylallyl diphosphate = deoxybrevianamide E + diphosphate. The protein operates within alkaloid biosynthesis. Its activity is regulated as follows. Addition of 5 mM Mg(2+), Ca(2+) or Mn(2+) slightly enhances catalysis (about 100-120%). Significant reduction of enzyme activity (2%-35%) is observed with Cu(2+), Zn(2+), Fe(2+), or Sn(2+) (5 mM). Functionally, deoxybrevianamide E synthase; part of the gene cluster that mediates the biosynthesis of notoamide, a fungal indole alkaloid that belongs to a family of natural products containing a characteristic bicyclo[2.2.2]diazaoctane core. The first step of notoamide biosynthesis involves coupling of L-proline and L-tryptophan by the bimodular NRPS notE, to produce cyclo-L-tryptophan-L-proline called brevianamide F. The reverse prenyltransferase notF then acts as a deoxybrevianamide E synthase and converts brevianamide F to deoxybrevianamide E via reverse prenylation at C-2 of the indole ring leading to the bicyclo[2.2.2]diazaoctane core. Deoxybrevianamide E is further hydroxylated at C-6 of the indole ring, likely catalyzed by the cytochrome P450 monooxygenase notG, to yield 6-hydroxy-deoxybrevianamide E. 6-hydroxy-deoxybrevianamide E is a specific substrate of the prenyltransferase notC for normal prenylation at C-7 to produce 6-hydroxy-7-prenyl-deoxybrevianamide, also called notoamide S. As the proposed pivotal branching point in notoamide biosynthesis, notoamide S can be diverted to notoamide E through an oxidative pyran ring closure putatively catalyzed by either notH cytochrome P450 monooxygenase or the notD FAD-linked oxidoreductase. This step would be followed by an indole 2,3-epoxidation-initiated pinacol-like rearrangement catalyzed by the notB FAD-dependent monooxygenase leading to the formation of notoamide C and notoamide D. On the other hand notoamide S is converted to notoamide T by notH (or notD), a bifunctional oxidase that also functions as the intramolecular Diels-Alderase responsible for generation of (+)-notoamide T. To generate antipodal (-)-notoaminide T, notH' (or notD') in Aspergillus versicolor is expected to catalyze a Diels-Alder reaction leading to the opposite stereochemistry. The remaining oxidoreductase notD (or notH) likely catalyzes the oxidative pyran ring formation to yield (+)-stephacidin A. The FAD-dependent monooxygenase notI is highly similar to notB and is predicted to catalyze a similar conversion from (+)-stephacidin A to (-)-notoamide B via the 2,3-epoxidation of (+)-stephacidin A followed by a pinacol-type rearrangement. Finally, it remains unclear which enzyme could be responsible for the final hydroxylation steps leading to notoamide A and sclerotiamide. In Aspergillus sp. (strain MF297-2), this protein is Deoxybrevianamide E synthase notF.